A 588-amino-acid polypeptide reads, in one-letter code: Proteasome-associated ATPase (588 aa).

Over residues 1-10 (MAAHDDDMNR) the composition is skewed to basic and acidic residues. Residues 1-23 (MAAHDDDMNRGIRPGRGSEDPAG) are disordered. Residues 47–94 (RILEERIVELQTNLAGVSAQNERLAGTLREARDQIVALKEEVDRLAQP) adopt a coiled-coil conformation. 276 to 281 (GCGKTL) provides a ligand contact to ATP. The segment at 587-588 (YL) is docks into pockets in the proteasome alpha-ring.

It belongs to the AAA ATPase family. Homohexamer. Assembles into a hexameric ring structure that caps the 20S proteasome core. Strongly interacts with the prokaryotic ubiquitin-like protein Pup through a hydrophobic interface; the interacting region of ARC lies in its N-terminal coiled-coil domain. There is one Pup binding site per ARC hexamer ring. Upon ATP-binding, the C-terminus of ARC interacts with the alpha-rings of the proteasome core, possibly by binding to the intersubunit pockets.

It functions in the pathway protein degradation; proteasomal Pup-dependent pathway. ATPase which is responsible for recognizing, binding, unfolding and translocation of pupylated proteins into the bacterial 20S proteasome core particle. May be essential for opening the gate of the 20S proteasome via an interaction with its C-terminus, thereby allowing substrate entry and access to the site of proteolysis. Thus, the C-termini of the proteasomal ATPase may function like a 'key in a lock' to induce gate opening and therefore regulate proteolysis. This chain is Proteasome-associated ATPase, found in Streptomyces coelicolor (strain ATCC BAA-471 / A3(2) / M145).